A 440-amino-acid polypeptide reads, in one-letter code: Xylose isomerase (440 aa).

Catalysis depends on residues histidine 101 and aspartate 104. Residues glutamate 232, glutamate 268, histidine 271, aspartate 296, aspartate 307, aspartate 309, and aspartate 339 each contribute to the Mg(2+) site.

This sequence belongs to the xylose isomerase family. In terms of assembly, homotetramer. It depends on Mg(2+) as a cofactor.

The protein localises to the cytoplasm. The catalysed reaction is alpha-D-xylose = alpha-D-xylulofuranose. This Salmonella paratyphi B (strain ATCC BAA-1250 / SPB7) protein is Xylose isomerase.